A 345-amino-acid chain; its full sequence is MTKKIVTLSGDGIGPEIMAAGLGVLDKVASKIEFDYDVDAKPFGGAGIDAEGHPLPKATLEAAKSADAILLAAIGGPKYDNAPVRPEQGLLAIRKELNLFANIRPVRIFDALKHLSPLKPERIEGVDFVVVRELTGGIYFGEHILEEDKARDINDYSADEIRRIMRRAFKIAQGRGKKVTSIDKQNVLATSKLWRKVADEVSLEFPDVTLEHQLVDSAAMIMITNPARFDVVVTENLFGDILSDESSVLPGTLGVMPSASHSENGPSLYEPIHGSAPDIAGQGIANPISMILSVAMMLRESFNETEGAELIENAVDKTLNQGILTRDLGGQASTAEMTAAIISNL.

Position 76–87 (76–87 (GPKYDNAPVRPE)) interacts with NAD(+). The substrate site is built by Arg-94, Arg-104, Arg-132, and Asp-216. Residues Asp-216, Asp-240, and Asp-244 each coordinate Mg(2+). 274–286 (GSAPDIAGQGIAN) serves as a coordination point for NAD(+).

This sequence belongs to the isocitrate and isopropylmalate dehydrogenases family. LeuB type 1 subfamily. As to quaternary structure, homodimer. Mg(2+) serves as cofactor. It depends on Mn(2+) as a cofactor.

It localises to the cytoplasm. The catalysed reaction is (2R,3S)-3-isopropylmalate + NAD(+) = 4-methyl-2-oxopentanoate + CO2 + NADH. The protein operates within amino-acid biosynthesis; L-leucine biosynthesis; L-leucine from 3-methyl-2-oxobutanoate: step 3/4. In terms of biological role, catalyzes the oxidation of 3-carboxy-2-hydroxy-4-methylpentanoate (3-isopropylmalate) to 3-carboxy-4-methyl-2-oxopentanoate. The product decarboxylates to 4-methyl-2 oxopentanoate. This is 3-isopropylmalate dehydrogenase from Streptococcus thermophilus (strain CNRZ 1066).